Reading from the N-terminus, the 143-residue chain is Large-conductance mechanosensitive channel (143 aa).

The next 2 membrane-spanning stretches (helical) occupy residues 10 to 30 (FAVKGNVMDLAIGVIIGGAFS) and 89 to 109 (GSFITVLINFIILAFIIFLMV).

This sequence belongs to the MscL family. In terms of assembly, homopentamer.

It is found in the cell inner membrane. Its function is as follows. Channel that opens in response to stretch forces in the membrane lipid bilayer. May participate in the regulation of osmotic pressure changes within the cell. The sequence is that of Large-conductance mechanosensitive channel from Burkholderia pseudomallei (strain 668).